A 500-amino-acid polypeptide reads, in one-letter code: NAD(P)H-quinone oxidoreductase chain 4, chloroplastic (500 aa).

14 helical membrane-spanning segments follow: residues 4–24 (FPWL…IFLF), 31–51 (VIKW…TYAF), 84–104 (GFSL…TLAA), 111–129 (SRLF…IGLF), 134–154 (LLLF…LLSM), 167–187 (FILY…GIAL), 208–228 (ALEI…SPII), 242–262 (HYST…YGLV), 272–292 (AHSI…IYAA), 305–325 (IAYS…SISD), 330–350 (GAIL…FLAG), 386–406 (LALP…GIIT), 416–436 (ILIT…LLSM), and 463–483 (FVSI…DFVF).

The protein belongs to the complex I subunit 4 family.

Its subcellular location is the plastid. It localises to the chloroplast thylakoid membrane. The catalysed reaction is a plastoquinone + NADH + (n+1) H(+)(in) = a plastoquinol + NAD(+) + n H(+)(out). It catalyses the reaction a plastoquinone + NADPH + (n+1) H(+)(in) = a plastoquinol + NADP(+) + n H(+)(out). The protein is NAD(P)H-quinone oxidoreductase chain 4, chloroplastic of Manihot esculenta (Cassava).